A 57-amino-acid chain; its full sequence is MSGLSVFILIALVLSVIIDVLNNSKVEAACKENCRQYCQAKGARNGKCINSNCKCYY.

Positions methionine 1–serine 15 are cleaved as a signal peptide. Residues valine 16–serine 24 constitute a propeptide that is removed on maturation. Disulfide bonds link cysteine 30/cysteine 48, cysteine 34/cysteine 53, and cysteine 38/cysteine 55.

Belongs to the short scorpion toxin superfamily. Potassium channel inhibitor family. Alpha-KTx 26 subfamily. As to expression, expressed by the venom gland.

It localises to the secreted. Its function is as follows. Recombinant toxin that reversibly inhibits the potassium current of mKv1.3/KCNA3 channel stably expressed in COS7 cells (IC(50)=150 nM). This is Potassium channel toxin alpha-KTx 26.3 from Mesobuthus gibbosus (Mediterranean checkered scorpion).